The sequence spans 75 residues: Small ribosomal subunit protein bS16 (75 aa).

Belongs to the bacterial ribosomal protein bS16 family.

The chain is Small ribosomal subunit protein bS16 from Campylobacter lari (strain RM2100 / D67 / ATCC BAA-1060).